A 237-amino-acid chain; its full sequence is Type III pantothenate kinase (237 aa).

Residue 6–13 (DAGNSRVK) coordinates ATP. Residues Tyr86 and 93–96 (GADR) contribute to the substrate site. Asp95 serves as the catalytic Proton acceptor. Thr118 lines the ATP pocket. Position 168 (Thr168) interacts with substrate.

It belongs to the type III pantothenate kinase family. In terms of assembly, homodimer. Requires NH4(+) as cofactor. K(+) is required as a cofactor.

It localises to the cytoplasm. It carries out the reaction (R)-pantothenate + ATP = (R)-4'-phosphopantothenate + ADP + H(+). It functions in the pathway cofactor biosynthesis; coenzyme A biosynthesis; CoA from (R)-pantothenate: step 1/5. Its function is as follows. Catalyzes the phosphorylation of pantothenate (Pan), the first step in CoA biosynthesis. The protein is Type III pantothenate kinase of Chromobacterium violaceum (strain ATCC 12472 / DSM 30191 / JCM 1249 / CCUG 213 / NBRC 12614 / NCIMB 9131 / NCTC 9757 / MK).